Here is a 235-residue protein sequence, read N- to C-terminus: uncharacterized protein (235 aa).

This sequence to B.subtilis YncM.

This is an uncharacterized protein from Bacillus subtilis (strain 168).